The primary structure comprises 1017 residues: Probable isoleucine--tRNA ligase, cytoplasmic (1017 aa).

The 'HIGH' region motif lies at Pro45–His55. The short motif at Lys609 to Arg613 is the 'KMSKS' region element. Lys612 lines the ATP pocket.

It belongs to the class-I aminoacyl-tRNA synthetase family.

Its subcellular location is the cytoplasm. It carries out the reaction tRNA(Ile) + L-isoleucine + ATP = L-isoleucyl-tRNA(Ile) + AMP + diphosphate. The sequence is that of Probable isoleucine--tRNA ligase, cytoplasmic from Encephalitozoon cuniculi (strain GB-M1) (Microsporidian parasite).